A 98-amino-acid chain; its full sequence is Complement inhibitor RaCI1 (98 aa).

Residues 1–20 (MNAMLVLFIASALFISEHNT) form the signal peptide. Cystine bridges form between C33-C57, C38-C59, and C53-C74. Residues 79 to 98 (TTKPPMAPGDNKDNKEEESN) are disordered. Residues 88–98 (DNKDNKEEESN) show a composition bias toward basic and acidic residues.

This sequence belongs to the RaCI family. Expressed in salivary glands.

The protein resides in the secreted. Functionally, complement inhibitor. Prevents complement-mediated C5 activation by binding to C5. Binds C5 at a different binding site than the other tick complement inhibitors OmCI and CirpT1, and the drug eculizumab. Inhibits the complement in human and guinea pig but not in other species tested (rabbit, rat, mouse, and pig). In Rhipicephalus appendiculatus (Brown ear tick), this protein is Complement inhibitor RaCI1.